The sequence spans 205 residues: Type-4 uracil-DNA glycosylase (205 aa).

[4Fe-4S] cluster contacts are provided by C13 and C16. Uracil is bound by residues 40–42 (GEG), F54, and N80. [4Fe-4S] cluster contacts are provided by C84 and C100. H155 serves as a coordination point for uracil.

This sequence belongs to the uracil-DNA glycosylase (UDG) superfamily. Type 4 (UDGa) family. Monomer.

The enzyme catalyses Hydrolyzes single-stranded DNA or mismatched double-stranded DNA and polynucleotides, releasing free uracil.. Product-inhibited by apurinic/apyrimidinic sites. Functionally, removes uracil bases that are present in DNA as a result of either deamination of cytosine or misincorporation of dUMP instead of dTMP. Can remove uracil from double-stranded DNA containing either a U/G, U/A, U/C or U/T base pair as well as from single-stranded DNA. Specifically recognizes uracil that is flipped out from double-stranded DNA. The polypeptide is Type-4 uracil-DNA glycosylase (Thermus thermophilus (strain ATCC 27634 / DSM 579 / HB8)).